The chain runs to 439 residues: 3beta-hydroxysteroid-dehydrogenase/decarboxylase isoform 1 (439 aa).

Gly-16–Ala-21 serves as a coordination point for NAD(+). N-linked (GlcNAc...) asparagine glycosylation is found at Asn-75 and Asn-158. Tyr-161 and Lys-165 together coordinate NAD(+). Residue Lys-165 is the Proton donor of the active site. A glycan (N-linked (GlcNAc...) asparagine) is linked at Asn-327. The Reticulon; atypical domain maps to Val-371–Asp-439. Transmembrane regions (helical) follow at residues Thr-381–Ser-401 and Ile-405–Ile-425.

Belongs to the 3-beta-HSD family.

It localises to the endoplasmic reticulum membrane. The enzyme catalyses a 3beta-hydroxysteroid-4alpha-carboxylate + NAD(+) = a 3-oxosteroid + CO2 + NADH. It carries out the reaction 4alpha-carboxy-4beta,14alpha-dimethyl-9beta,19-cyclo-5alpha-ergost-24(24(1))-en-3beta-ol + NAD(+) = cycloeucalenone + CO2 + NADH. The protein operates within steroid biosynthesis; zymosterol biosynthesis; zymosterol from lanosterol: step 4/6. 3beta-hydroxysteroid-dehydrogenase/decarboxylase involved in sterol synthesis. Catalyzes the formation of 3-oxosteroids from 3beta-hydroxysteroids-4alpha-carboxylate. Involved in the regulation of inflorescence internodes and leaves growth, probably by affecting auxin transporter activity possibly by altering sterol composition in the membranes. In Arabidopsis thaliana (Mouse-ear cress), this protein is 3beta-hydroxysteroid-dehydrogenase/decarboxylase isoform 1.